The following is a 1825-amino-acid chain: Tail fiber protein (1825 aa).

Coiled-coil stretches lie at residues 393–466 (VDMS…NSLE), 681–701 (DGVQ…SQKV), 843–891 (KGDQ…NMLA), and 975–998 (DVAK…LQNI).

The protein localises to the virion. In terms of biological role, structural protein, a component of a tail fiber. This Enterococcus faecalis (Streptococcus faecalis) protein is Tail fiber protein.